The primary structure comprises 647 residues: tRNA 5-methylaminomethyl-2-thiouridine biosynthesis bifunctional protein MnmC (647 aa).

A tRNA (mnm(5)s(2)U34)-methyltransferase region spans residues 1-227 (MLTWKNNLTP…KREMLIGSYS (227 aa)). The FAD-dependent cmnm(5)s(2)U34 oxidoreductase stretch occupies residues 256–647 (VGAGIAGTTL…ARFLYRKVRK (392 aa)).

The protein in the N-terminal section; belongs to the methyltransferase superfamily. tRNA (mnm(5)s(2)U34)-methyltransferase family. In the C-terminal section; belongs to the DAO family. It depends on FAD as a cofactor.

The protein resides in the cytoplasm. The enzyme catalyses 5-aminomethyl-2-thiouridine(34) in tRNA + S-adenosyl-L-methionine = 5-methylaminomethyl-2-thiouridine(34) in tRNA + S-adenosyl-L-homocysteine + H(+). In terms of biological role, catalyzes the last two steps in the biosynthesis of 5-methylaminomethyl-2-thiouridine (mnm(5)s(2)U) at the wobble position (U34) in tRNA. Catalyzes the FAD-dependent demodification of cmnm(5)s(2)U34 to nm(5)s(2)U34, followed by the transfer of a methyl group from S-adenosyl-L-methionine to nm(5)s(2)U34, to form mnm(5)s(2)U34. This chain is tRNA 5-methylaminomethyl-2-thiouridine biosynthesis bifunctional protein MnmC, found in Leptospira interrogans serogroup Icterohaemorrhagiae serovar Lai (strain 56601).